A 375-amino-acid polypeptide reads, in one-letter code: MFNQSFLKYMLFGFFLFSFHAHADRIRDLITIQGIRYNQLIGYGLVVGLDGTGDRTNQISYTTHALKNMLFQLGITFPNEQNAKFKNIAAVMVTTKFPNFTHIGQQVDVIVSSVGDATSLQGGTLLMTPLRGTDNKIYAVAQGNIIINDKNSVERFKNILVNNHLNNGMIINGATIEREMHTDFGKNETLNLQLNNEDFTVAQEISKKINMQYPKSAVALNSKIIQVCIPNNNIEQVEMLATIQNINIPIPIQDAKILINAKTGNIITNQTININTCAITHKNISMTIAFNKLKINRLVPNPIIKSDKNNNKTLNDEQIYKNNYNTNNFQYLEKTSNLNTIICALNLFDITTTELISILQSMHDAGCFHAKLEIT.

An N-terminal signal peptide occupies residues 1–23 (MFNQSFLKYMLFGFFLFSFHAHA).

This sequence belongs to the FlgI family. As to quaternary structure, the basal body constitutes a major portion of the flagellar organelle and consists of four rings (L,P,S, and M) mounted on a central rod.

The protein resides in the bacterial flagellum basal body. In terms of biological role, assembles around the rod to form the L-ring and probably protects the motor/basal body from shearing forces during rotation. In Buchnera aphidicola subsp. Baizongia pistaciae (strain Bp), this protein is Flagellar P-ring protein.